The primary structure comprises 455 residues: Chromosomal replication initiator protein DnaA (455 aa).

A domain I, interacts with DnaA modulators region spans residues 1–75; it reads MDTNNNIEKE…EILSQNKVGM (75 aa). Positions 75–106 are domain II; that stretch reads MHLAHSVDVRIEVAPKIQISAQPNINYKAVKT. The interval 107–321 is domain III, AAA+ region; it reads SVKDSYTFEN…GAIIKISVNA (215 aa). ATP is bound by residues glycine 151, glycine 153, lysine 154, and threonine 155. Residues 322-455 form a domain IV, binds dsDNA region; that stretch reads NLMNAPIDLN…DKKTAFHSSE (134 aa).

The protein belongs to the DnaA family. As to quaternary structure, oligomerizes as a right-handed, spiral filament on DNA at oriC.

Its subcellular location is the cytoplasm. Plays an essential role in the initiation and regulation of chromosomal replication. ATP-DnaA binds to the origin of replication (oriC) to initiate formation of the DNA replication initiation complex once per cell cycle. Binds the DnaA box (a 9 base pair repeat at the origin) and separates the double-stranded (ds)DNA. Forms a right-handed helical filament on oriC DNA; dsDNA binds to the exterior of the filament while single-stranded (ss)DNA is stabiized in the filament's interior. The ATP-DnaA-oriC complex binds and stabilizes one strand of the AT-rich DNA unwinding element (DUE), permitting loading of DNA polymerase. After initiation quickly degrades to an ADP-DnaA complex that is not apt for DNA replication. Binds acidic phospholipids. The sequence is that of Chromosomal replication initiator protein DnaA from Helicobacter pylori (strain Shi470).